A 252-amino-acid polypeptide reads, in one-letter code: Phosphoglycolate phosphatase (252 aa).

The active-site Nucleophile is Asp13. 3 residues coordinate Mg(2+): Asp13, Asp15, and Asp192.

Belongs to the HAD-like hydrolase superfamily. CbbY/CbbZ/Gph/YieH family. Monomer. Mg(2+) serves as cofactor. Chloride is required as a cofactor.

The catalysed reaction is 2-phosphoglycolate + H2O = glycolate + phosphate. It participates in organic acid metabolism; glycolate biosynthesis; glycolate from 2-phosphoglycolate: step 1/1. Its function is as follows. Specifically catalyzes the dephosphorylation of 2-phosphoglycolate. Is involved in the dissimilation of the intracellular 2-phosphoglycolate formed during the DNA repair of 3'-phosphoglycolate ends, a major class of DNA lesions induced by oxidative stress. This is Phosphoglycolate phosphatase from Shigella flexneri.